The chain runs to 288 residues: Light-independent protochlorophyllide reductase iron-sulfur ATP-binding protein (288 aa).

ATP is bound by residues 10–15 and Lys39; that span reads GIGKST. Ser14 provides a ligand contact to Mg(2+). Residues Cys95 and Cys129 each contribute to the [4Fe-4S] cluster site. Residue 180–181 participates in ATP binding; the sequence is NR.

It belongs to the NifH/BchL/ChlL family. In terms of assembly, homodimer. Protochlorophyllide reductase is composed of three subunits; ChlL, ChlN and ChlB. [4Fe-4S] cluster is required as a cofactor.

It is found in the plastid. The protein localises to the chloroplast. It catalyses the reaction chlorophyllide a + oxidized 2[4Fe-4S]-[ferredoxin] + 2 ADP + 2 phosphate = protochlorophyllide a + reduced 2[4Fe-4S]-[ferredoxin] + 2 ATP + 2 H2O. Its pathway is porphyrin-containing compound metabolism; chlorophyll biosynthesis (light-independent). Functionally, component of the dark-operative protochlorophyllide reductase (DPOR) that uses Mg-ATP and reduced ferredoxin to reduce ring D of protochlorophyllide (Pchlide) to form chlorophyllide a (Chlide). This reaction is light-independent. The L component serves as a unique electron donor to the NB-component of the complex, and binds Mg-ATP. This is Light-independent protochlorophyllide reductase iron-sulfur ATP-binding protein from Chara vulgaris (Common stonewort).